Here is a 273-residue protein sequence, read N- to C-terminus: MAIVKCKPTSAGRRHVVKVVNPELHKGKPFAALLDTKSKTGGRNNYGRITTRHIGGGHKQHYRLIDFKRNKLDIPGVVERLEYDPNRSANIALVLYKDGERRYILAPKGLAAGDQIQAGAHAPIKVGNALPMRNIPVGSTVHNVELKPGKGGQIARSAGSYVQIIAREGNYVTLRLRSGEMRKVLAECSATIGEVGNSEHMLRVLGKAGANRWRGVRPTVRGTAMNPVDHPHGGGEGRNFGKHPVTPWGVQTKGKKTRHNKRTDKYIVRRRGK.

The tract at residues 221 to 262 (RGTAMNPVDHPHGGGEGRNFGKHPVTPWGVQTKGKKTRHNKR) is disordered. Residues 253–262 (KGKKTRHNKR) are compositionally biased toward basic residues.

The protein belongs to the universal ribosomal protein uL2 family. In terms of assembly, part of the 50S ribosomal subunit. Forms a bridge to the 30S subunit in the 70S ribosome.

Functionally, one of the primary rRNA binding proteins. Required for association of the 30S and 50S subunits to form the 70S ribosome, for tRNA binding and peptide bond formation. It has been suggested to have peptidyltransferase activity; this is somewhat controversial. Makes several contacts with the 16S rRNA in the 70S ribosome. This is Large ribosomal subunit protein uL2 from Aggregatibacter actinomycetemcomitans (Actinobacillus actinomycetemcomitans).